The chain runs to 388 residues: MRIWKSHPLFSLVNGYLIDSPQPSNLSYLWNFGSLLGFCLVIQIVTGVTLAMHYNPSVSEAFNSVEHIMRDVNNGWLIRYLHSNTASAFFFLVYLHVGRGLYYGSYKAPRTLTWTIGTIILVLMMATAFLGYVLPYGQMSLWGATVITNLLSAIPWVGQDIVEFVWGGFSVNNATLNRFFALHFVLPFVLAALVLMHLIALHDTAGSGNPLGVSGNYDRLPFAPYFIFKDLITIFLFIIVLSIFIFFMPNVLGDSENYVMANPMQTPPAIVPEWYLLPFYAILRSIPNKLLGVIAMFSAILIIMIMPITDLGRSRGLQFRPLSKITFYIFVANFLVLMQLGANHVESPFIEFGQISTVLYFSHFLIIVPLVSLIENTLVDMHLNNTIT.

4 consecutive transmembrane segments (helical) span residues 32–52 (FGSL…TLAM), 76–98 (WLIR…LHVG), 113–133 (TWTI…LGYV), and 179–199 (FFAL…MHLI). Heme b-binding residues include His-82 and His-96. Heme b contacts are provided by His-183 and His-197. His-202 is a binding site for a ubiquinone. The next 4 helical transmembrane spans lie at 226 to 246 (FIFK…IFIF), 290 to 310 (LLGV…PITD), 322 to 342 (LSKI…QLGA), and 349 to 369 (FIEF…IIVP).

This sequence belongs to the cytochrome b family. Fungal cytochrome b-c1 complex contains 10 subunits; 3 respiratory subunits, 2 core proteins and 5 low-molecular weight proteins. Cytochrome b-c1 complex is a homodimer. The cofactor is heme b.

It is found in the mitochondrion inner membrane. Component of the ubiquinol-cytochrome c reductase complex (complex III or cytochrome b-c1 complex) that is part of the mitochondrial respiratory chain. The b-c1 complex mediates electron transfer from ubiquinol to cytochrome c. Contributes to the generation of a proton gradient across the mitochondrial membrane that is then used for ATP synthesis. The sequence is that of Cytochrome b (cob) from Zymoseptoria tritici (Speckled leaf blotch fungus).